The sequence spans 545 residues: Capsular polysaccharide phosphotransferase SacB (545 aa).

The protein belongs to the stealth family.

Functionally, may be the polymerase that links individual UDP-N-acetyl-D-mannosamine monomers. In serotype A the capsule is composed of repeated units of (alpha 1-6)-linked N-acetyl-D-mannosamine-1-phosphate. In Neisseria meningitidis serogroup A, this protein is Capsular polysaccharide phosphotransferase SacB (sacB).